The chain runs to 109 residues: MFGKGGMGNLMKQAQQMQERMQKLQEEIAXMEVVGESGAGLVKVTITGSHSVRRVNIDESLMEDDKEMLEDLIAAAFNDAARRVEETQKEKMAAITGGMQLPPGMKMPF.

This sequence belongs to the YbaB/EbfC family. Homodimer.

The protein localises to the cytoplasm. Its subcellular location is the nucleoid. Its function is as follows. Binds to DNA and alters its conformation. May be involved in regulation of gene expression, nucleoid organization and DNA protection. This Vibrio vulnificus (strain CMCP6) protein is Nucleoid-associated protein VV1_2004.